The chain runs to 233 residues: Cilia- and flagella-associated protein 299 (233 aa).

It is found in the cytoplasm. The protein resides in the nucleus. Functionally, may be involved in spermatogenesis. This is Cilia- and flagella-associated protein 299 from Xenopus laevis (African clawed frog).